Reading from the N-terminus, the 481-residue chain is Adenosylhomocysteinase (481 aa).

Substrate is bound by residues T65, D140, and E200. 201 to 203 lines the NAD(+) pocket; that stretch reads TTT. Substrate contacts are provided by K230 and D234. NAD(+) is bound by residues N235, 264-269, E287, N322, 343-345, and N393; these read GYGDVG and IGH.

The protein belongs to the adenosylhomocysteinase family. NAD(+) serves as cofactor.

It localises to the cytoplasm. The enzyme catalyses S-adenosyl-L-homocysteine + H2O = L-homocysteine + adenosine. It functions in the pathway amino-acid biosynthesis; L-homocysteine biosynthesis; L-homocysteine from S-adenosyl-L-homocysteine: step 1/1. In terms of biological role, may play a key role in the regulation of the intracellular concentration of adenosylhomocysteine. This chain is Adenosylhomocysteinase, found in Polynucleobacter asymbioticus (strain DSM 18221 / CIP 109841 / QLW-P1DMWA-1) (Polynucleobacter necessarius subsp. asymbioticus).